Here is a 114-residue protein sequence, read N- to C-terminus: Probable 4-amino-4-deoxy-L-arabinose-phosphoundecaprenol flippase subunit ArnE (114 aa).

Transmembrane regions (helical) follow at residues 41 to 61 (GWLWLALFSLGLGLLVWLLVL) and 68 to 88 (VAYPMLSLNFVFITLIAHFVF). An EamA domain is found at 43 to 112 (LWLALFSLGL…VIGGVLLLSR (70 aa)).

Belongs to the ArnE family. As to quaternary structure, heterodimer of ArnE and ArnF.

Its subcellular location is the cell inner membrane. It participates in bacterial outer membrane biogenesis; lipopolysaccharide biosynthesis. In terms of biological role, translocates 4-amino-4-deoxy-L-arabinose-phosphoundecaprenol (alpha-L-Ara4N-phosphoundecaprenol) from the cytoplasmic to the periplasmic side of the inner membrane. This chain is Probable 4-amino-4-deoxy-L-arabinose-phosphoundecaprenol flippase subunit ArnE, found in Pseudomonas fluorescens (strain ATCC BAA-477 / NRRL B-23932 / Pf-5).